Here is a 306-residue protein sequence, read N- to C-terminus: Palmitoyl-protein thioesterase 1 (306 aa).

A signal peptide spans 1 to 27 (MASSSCLWLLALAFLLGSCASLALGHL). Cystine bridges form between Cys-45-Cys-46, Cys-96-Cys-128, and Cys-152-Cys-160. Residue Ser-115 is part of the active site. Asn-197, Asn-212, and Asn-232 each carry an N-linked (GlcNAc...) asparagine glycan. Catalysis depends on residues Asp-233 and His-289.

The protein belongs to the palmitoyl-protein thioesterase family. Interacts with CLN5, ATP5F1A and ATP5F1B. Post-translationally, glycosylated. As to expression, spleen, brain, seminal vesicle, and testis. Lower levels of activity in liver, heart, lung, and skeletal muscle.

The protein localises to the lysosome. Its subcellular location is the secreted. It localises to the golgi apparatus. It is found in the endoplasmic reticulum. It catalyses the reaction S-hexadecanoyl-L-cysteinyl-[protein] + H2O = L-cysteinyl-[protein] + hexadecanoate + H(+). The catalysed reaction is hexadecanoyl-CoA + H2O = hexadecanoate + CoA + H(+). The enzyme catalyses S-hexadecanoyl-N-acetylcysteamine + H2O = N-acetylcysteamine + hexadecanoate + H(+). It carries out the reaction S-hexadecanoyl-N-acetylcysteine methyl ester + H2O = N-acetylcysteine methyl ester + hexadecanoate + H(+). Its activity is regulated as follows. Palmitoylation reduces PPT1 enzymatic activity. Functionally, has thioesterase activity against fatty acid thioesters with 14 -18 carbons, including palmitoyl-CoA, S-palmitoyl-N-acetylcysteamine, and palmitoylated proteins. In contrast to PPT2, PPT1 can hydrolyze palmitoylated proteins and palmitoylcysteine. The chain is Palmitoyl-protein thioesterase 1 (PPT1) from Bos taurus (Bovine).